The chain runs to 414 residues: Probable sugar phosphate/phosphate translocator At1g06470 (414 aa).

Helical transmembrane passes span 72 to 92 (VLKT…LTLY), 101 to 121 (LGKF…QAVL), 172 to 192 (TFAT…AFAF), 197 to 217 (PSLK…LTVA), 224 to 244 (FWGF…WCMT), 259 to 279 (FIFM…LSLL), 303 to 323 (FLML…YVLV), 328 to 348 (AVTV…VAVF), and 354 to 374 (FTWL…LFNW). Residues 106–216 (APLLMNTIHF…VISAGVLLTV (111 aa)) enclose the EamA domain.

This sequence belongs to the TPT transporter family. TPT (TC 2.A.7.9) subfamily.

Its subcellular location is the membrane. This Arabidopsis thaliana (Mouse-ear cress) protein is Probable sugar phosphate/phosphate translocator At1g06470.